The following is a 588-amino-acid chain: Calcium/calmodulin-dependent protein kinase kinase 2 (588 aa).

The segment covering Met-1 to Ala-14 has biased composition (polar residues). 2 disordered regions span residues Met-1–Pro-33 and Gly-78–Ser-100. Ser-2 is subject to N-acetylserine. Phosphoserine is present on residues Ser-100, Ser-114, Ser-129, Ser-133, and Ser-137. Low complexity predominate over residues Tyr-128 to Arg-139. Residues Tyr-128–His-149 are disordered. Residues Tyr-165–Val-446 enclose the Protein kinase domain. Residues Ile-171 to Val-179 and Lys-194 contribute to the ATP site. The segment at Gln-204–Pro-226 is RP domain. Positions Ala-205–Gln-225 are disordered. The active-site Proton acceptor is Asp-312. Residues Glu-472 to His-477 are autoinhibitory domain. Positions Val-475–Phe-500 are calmodulin-binding. A phosphoserine mark is found at Pro-479, Ser-495, Ser-511, Thr-522, and Ser-572. The interval Gly-497–Glu-588 is disordered. The segment covering Pro-521–Gln-536 has biased composition (basic and acidic residues). The span at Leu-579–Glu-588 shows a compositional bias: basic and acidic residues.

This sequence belongs to the protein kinase superfamily. Ser/Thr protein kinase family. Interacts with calmodulin. In terms of processing, autophosphorylated and phosphorylated by PKA. Each isoform may show a different pattern of phosphorylation. Ubiquitously expressed with higher levels in the brain. Intermediate levels are detected in spleen, prostate, thyroid and leukocytes. The lowest level is in lung.

It localises to the nucleus. The protein resides in the cytoplasm. Its subcellular location is the cell projection. The protein localises to the neuron projection. It carries out the reaction L-seryl-[protein] + ATP = O-phospho-L-seryl-[protein] + ADP + H(+). It catalyses the reaction L-threonyl-[protein] + ATP = O-phospho-L-threonyl-[protein] + ADP + H(+). Its activity is regulated as follows. Activated by Ca(2+)/calmodulin. Binding of calmodulin may relieve intrasteric autoinhibition. Autophosphorylation does not alter activity or regulation by Ca(2+)/calmodulin. In part, activity is independent on Ca(2+)/calmodulin. In terms of biological role, calcium/calmodulin-dependent protein kinase belonging to a proposed calcium-triggered signaling cascade involved in a number of cellular processes. Isoform 1, isoform 2 and isoform 3 phosphorylate CAMK1 and CAMK4. Isoform 3 phosphorylates CAMK1D. Isoform 4, isoform 5 and isoform 6 lacking part of the calmodulin-binding domain are inactive. Efficiently phosphorylates 5'-AMP-activated protein kinase (AMPK) trimer, including that consisting of PRKAA1, PRKAB1 and PRKAG1. This phosphorylation is stimulated in response to Ca(2+) signals. Seems to be involved in hippocampal activation of CREB1. May play a role in neurite growth. Isoform 3 may promote neurite elongation, while isoform 1 may promoter neurite branching. The polypeptide is Calcium/calmodulin-dependent protein kinase kinase 2 (CAMKK2) (Homo sapiens (Human)).